The chain runs to 148 residues: Receptor activity-modifying protein 1 (148 aa).

The first 26 residues, 1-26 (MARALCRLPRRGLWLLLAHHLFMTTA), serve as a signal peptide directing secretion. Intrachain disulfides connect C27–C82, C40–C72, and C57–C104. Topologically, residues 27–118 (CQEANYGALL…RAVRDPPGSI (92 aa)) are extracellular. The helical transmembrane segment at 119 to 140 (LYPFIVVPITVTLLVTALVVWQ) threads the bilayer. The Cytoplasmic segment spans residues 141–148 (SKRTEGIV).

Belongs to the RAMP family. In terms of assembly, heterodimer of CALCRL and RAMP1; the interaction induces allosteric modulation of CALCRL function and CGRP1/CALCA and CGRP2/CALCB ligand specificity. Heterodimer of CALCR and RAMP1; interaction forms the AMYR1 receptor complex for amylin/IAPP and CGRP1/CALCA ligands. In terms of tissue distribution, expressed in many tissues including the uterus, bladder, brain, pancreas and gastro-intestinal tract.

It localises to the cell membrane. Accessory protein that interacts with and modulates the function of G-protein coupled receptors including calcitonin gene-related peptide type 1 receptor (CALCRL) and calcitonin receptor (CALCR). Required for the transport of CALCRL to the plasma membrane. Together with CALCRL, form the receptor complex for the calcitonin gene-related peptides CGRP1/CALCA and CGRP2/CALCB. Together with CALCR, form the AMYR1 receptor complex for amylin/IAPP and CGRP1/CALCA. The chain is Receptor activity-modifying protein 1 from Homo sapiens (Human).